Reading from the N-terminus, the 87-residue chain is UPF0297 protein Sca_1229 (87 aa).

This sequence belongs to the UPF0297 family.

The sequence is that of UPF0297 protein Sca_1229 from Staphylococcus carnosus (strain TM300).